The sequence spans 389 residues: UDP-D-apiose/UDP-D-xylose synthase 1 (389 aa).

NAD(+)-binding residues include phenylalanine 28, isoleucine 29, aspartate 49, asparagine 76, isoleucine 77, and leucine 96. UDP-alpha-D-glucuronate-binding residues include tyrosine 105, threonine 139, glutamate 141, arginine 182, and tyrosine 185. Tyrosine 185 and lysine 189 together coordinate NAD(+). Catalysis depends on tyrosine 185, which acts as the Proton acceptor. A UDP-alpha-D-glucuronate-binding site is contributed by asparagine 214. Positions 215 and 235 each coordinate NAD(+). Lysine 251, valine 253, arginine 260, tyrosine 331, tyrosine 335, aspartate 337, and arginine 341 together coordinate UDP-alpha-D-glucuronate.

This sequence belongs to the NAD(P)-dependent epimerase/dehydratase family. As to quaternary structure, homodimer and heterodimer with AXS2. NAD(+) serves as cofactor. In terms of tissue distribution, widely expressed with stronger expression in leaves and stems, and lower levels in flowers, siliques, pistils, pollen and roots.

It localises to the cytoplasm. The catalysed reaction is UDP-alpha-D-glucuronate + H(+) = UDP-alpha-D-xylose + CO2. It catalyses the reaction UDP-alpha-D-glucuronate + H(+) = UDP-alpha-D-apiose + CO2. Inhibited by UDP-D-galacturonate. Its function is as follows. Together with AXS2, catalyzes the conversion of UDP-D-glucuronate into a mixture of UDP-D-apiose (UDP-Api) as the main product and UDP-D-xylose to a lesser extent, via a cycle of oxidation and reduction. D-Apiose (3-C-hydroxymethyl-d-erythrose) is the only plant cell wall monosaccharide with a branched carbon skeleton and is found in rhamnogalacturonan II (RG-II), apiogalacturonan, and several apioglycosides. The sequence is that of UDP-D-apiose/UDP-D-xylose synthase 1 from Arabidopsis thaliana (Mouse-ear cress).